The chain runs to 367 residues: 3-isopropylmalate dehydrogenase (367 aa).

75-88 (GPKWDGIERSKRPE) contributes to the NAD(+) binding site. Positions 95, 105, 133, and 230 each coordinate substrate. Mg(2+) is bound by residues D230, D254, and D258. NAD(+) is bound at residue 288–300 (GSAPDIAGQDIAN).

Belongs to the isocitrate and isopropylmalate dehydrogenases family. LeuB type 1 subfamily. Homodimer. Mg(2+) is required as a cofactor. Mn(2+) serves as cofactor.

The protein localises to the cytoplasm. The catalysed reaction is (2R,3S)-3-isopropylmalate + NAD(+) = 4-methyl-2-oxopentanoate + CO2 + NADH. It functions in the pathway amino-acid biosynthesis; L-leucine biosynthesis; L-leucine from 3-methyl-2-oxobutanoate: step 3/4. Its function is as follows. Catalyzes the oxidation of 3-carboxy-2-hydroxy-4-methylpentanoate (3-isopropylmalate) to 3-carboxy-4-methyl-2-oxopentanoate. The product decarboxylates to 4-methyl-2 oxopentanoate. In Psychrobacter cryohalolentis (strain ATCC BAA-1226 / DSM 17306 / VKM B-2378 / K5), this protein is 3-isopropylmalate dehydrogenase.